A 484-amino-acid chain; its full sequence is Transcription factor cghD (484 aa).

Residues 21–54 (CDRCRLQKLKCTVQSMESDGRMVCERCVRAKVPC) constitute a DNA-binding region (zn(2)-C6 fungal-type). 4 disordered regions span residues 59–117 (RRRA…PTLA), 136–174 (TTAPTYSYHHHHHDSYQLGEGPPTPFPNPATTGGGSGSS), 202–242 (PAST…FSTT), and 386–406 (HMHSTPAPTTSPTLQLGELPS). Residues 64 to 76 (RPSDTKKQGDSST) show a composition bias toward basic and acidic residues. Residues 77–107 (RRSTAPRTTNPEPTVLTPPLSTTSSTSEQTL) are compositionally biased toward low complexity. A compositionally biased stretch (low complexity) spans 202 to 213 (PASTSTSTGSPT).

The protein resides in the nucleus. Its function is as follows. Transcription factor that regulates the expression of the gene cluster that mediates the biosynthesis of the tetramic acid Sch210972, a potential anti-HIV fungal natural product that contains a decalin core. The chain is Transcription factor cghD from Chaetomium globosum (strain ATCC 6205 / CBS 148.51 / DSM 1962 / NBRC 6347 / NRRL 1970) (Soil fungus).